We begin with the raw amino-acid sequence, 144 residues long: Large ribosomal subunit protein uL16 (144 aa).

Belongs to the universal ribosomal protein uL16 family. In terms of assembly, part of the 50S ribosomal subunit.

Functionally, binds 23S rRNA and is also seen to make contacts with the A and possibly P site tRNAs. This is Large ribosomal subunit protein uL16 from Listeria innocua serovar 6a (strain ATCC BAA-680 / CLIP 11262).